Consider the following 336-residue polypeptide: D-erythrose-4-phosphate dehydrogenase (336 aa).

NAD(+) contacts are provided by residues Arg11 to Ile12 and Arg80. Residues Ser153–Thr155, Arg199, Thr212–Lys213, and Arg235 contribute to the substrate site. The active-site Nucleophile is Cys154. Asn317 lines the NAD(+) pocket.

This sequence belongs to the glyceraldehyde-3-phosphate dehydrogenase family. Epd subfamily. In terms of assembly, homotetramer.

It is found in the cytoplasm. It catalyses the reaction D-erythrose 4-phosphate + NAD(+) + H2O = 4-phospho-D-erythronate + NADH + 2 H(+). The protein operates within cofactor biosynthesis; pyridoxine 5'-phosphate biosynthesis; pyridoxine 5'-phosphate from D-erythrose 4-phosphate: step 1/5. Its function is as follows. Catalyzes the NAD-dependent conversion of D-erythrose 4-phosphate to 4-phosphoerythronate. The polypeptide is D-erythrose-4-phosphate dehydrogenase (Aeromonas hydrophila subsp. hydrophila (strain ATCC 7966 / DSM 30187 / BCRC 13018 / CCUG 14551 / JCM 1027 / KCTC 2358 / NCIMB 9240 / NCTC 8049)).